A 158-amino-acid chain; its full sequence is MVEKIPMTASGYAALSDELKHRQSVDRPRIIEHIAEARSHGDLSENAEYHAAKEEQSHNEGRINELEDKLARADIIDVSKLSGDTVKFGATVTLIDEDTEKKAVWQIVGEAEADAKKGKISITSPLARALIGKKAGSSVEVVAPGGAKAYEIAKVEWR.

Residues A47–D74 are a coiled coil.

It belongs to the GreA/GreB family.

Its function is as follows. Necessary for efficient RNA polymerase transcription elongation past template-encoded arresting sites. The arresting sites in DNA have the property of trapping a certain fraction of elongating RNA polymerases that pass through, resulting in locked ternary complexes. Cleavage of the nascent transcript by cleavage factors such as GreA or GreB allows the resumption of elongation from the new 3'terminus. GreA releases sequences of 2 to 3 nucleotides. This is Transcription elongation factor GreA from Rhodopseudomonas palustris (strain ATCC BAA-98 / CGA009).